A 291-amino-acid polypeptide reads, in one-letter code: 4-hydroxy-tetrahydrodipicolinate synthase (291 aa).

Thr45 contacts pyruvate. Residue Tyr133 is the Proton donor/acceptor of the active site. Residue Lys161 is the Schiff-base intermediate with substrate of the active site. Pyruvate is bound at residue Ile203.

The protein belongs to the DapA family. As to quaternary structure, homotetramer; dimer of dimers.

The protein resides in the cytoplasm. The enzyme catalyses L-aspartate 4-semialdehyde + pyruvate = (2S,4S)-4-hydroxy-2,3,4,5-tetrahydrodipicolinate + H2O + H(+). It participates in amino-acid biosynthesis; L-lysine biosynthesis via DAP pathway; (S)-tetrahydrodipicolinate from L-aspartate: step 3/4. Functionally, catalyzes the condensation of (S)-aspartate-beta-semialdehyde [(S)-ASA] and pyruvate to 4-hydroxy-tetrahydrodipicolinate (HTPA). This Neisseria meningitidis serogroup C (strain 053442) protein is 4-hydroxy-tetrahydrodipicolinate synthase.